Here is a 60-residue protein sequence, read N- to C-terminus: MAVQKSRKSRSRRDMRRSHHRMEIAEISIDATTGEKHRRHHMTKDGFYRGRQLFKVSQDA.

A compositionally biased stretch (basic residues) spans 1–20 (MAVQKSRKSRSRRDMRRSHH). The disordered stretch occupies residues 1–22 (MAVQKSRKSRSRRDMRRSHHRM).

It belongs to the bacterial ribosomal protein bL32 family.

The chain is Large ribosomal subunit protein bL32 from Psychrobacter arcticus (strain DSM 17307 / VKM B-2377 / 273-4).